Reading from the N-terminus, the 325-residue chain is Beta-ketoacyl-[acyl-carrier-protein] synthase III (325 aa).

Residues C112 and H250 contribute to the active site. The segment at 251–255 is ACP-binding; sequence QANIR. N280 is an active-site residue.

Belongs to the thiolase-like superfamily. FabH family. Homodimer.

It localises to the cytoplasm. The enzyme catalyses malonyl-[ACP] + acetyl-CoA + H(+) = 3-oxobutanoyl-[ACP] + CO2 + CoA. It participates in lipid metabolism; fatty acid biosynthesis. In terms of biological role, catalyzes the condensation reaction of fatty acid synthesis by the addition to an acyl acceptor of two carbons from malonyl-ACP. Catalyzes the first condensation reaction which initiates fatty acid synthesis and may therefore play a role in governing the total rate of fatty acid production. Possesses both acetoacetyl-ACP synthase and acetyl transacylase activities. Its substrate specificity determines the biosynthesis of branched-chain and/or straight-chain of fatty acids. This chain is Beta-ketoacyl-[acyl-carrier-protein] synthase III, found in Streptococcus mutans serotype c (strain ATCC 700610 / UA159).